Here is a 341-residue protein sequence, read N- to C-terminus: Sulfate/thiosulfate import ATP-binding protein CysA 2 (341 aa).

Positions 3–235 (IRLENVVKTF…PNSSFVMRFL (233 aa)) constitute an ABC transporter domain. 35 to 42 (GPSGSGKT) lines the ATP pocket.

The protein belongs to the ABC transporter superfamily. Sulfate/tungstate importer (TC 3.A.1.6) family. As to quaternary structure, the complex is composed of two ATP-binding proteins (CysA), two transmembrane proteins (CysT and CysW) and a solute-binding protein (CysP).

The protein localises to the cell inner membrane. It catalyses the reaction sulfate(out) + ATP + H2O = sulfate(in) + ADP + phosphate + H(+). It carries out the reaction thiosulfate(out) + ATP + H2O = thiosulfate(in) + ADP + phosphate + H(+). Its function is as follows. Part of the ABC transporter complex CysAWTP involved in sulfate/thiosulfate import. Responsible for energy coupling to the transport system. The chain is Sulfate/thiosulfate import ATP-binding protein CysA 2 from Agrobacterium fabrum (strain C58 / ATCC 33970) (Agrobacterium tumefaciens (strain C58)).